The following is a 190-amino-acid chain: MSEGSEDTKTKLDSAGELSDVDNENCSSSGSGGGSSSGDTKRTCVDCGTIRTPLWRGGPAGPKSLCNACGIKSRKKRQAALGMRSEEKKKNRKSNCNNDLNLDHRNAKKYKINIVDDGKIDIDDDPKICNNKRSSSSSSNKGVSKFLDLGFKVPVMKRSAVEKKRLWRKLGEEERAAVLLMALSCSSVYA.

The span at 1–14 shows a compositional bias: basic and acidic residues; sequence MSEGSEDTKTKLDS. Disordered regions lie at residues 1–42 and 77–101; these read MSEG…DTKR and RQAA…NDLN. The GATA-type zinc-finger motif lies at 38 to 92; it reads GDTKRTCVDCGTIRTPLWRGGPAGPKSLCNACGIKSRKKRQAALGMRSEEKKKNR.

It belongs to the type IV zinc-finger family. Class B subfamily.

The protein localises to the nucleus. Functionally, transcriptional regulator that specifically binds 5'-GATA-3' or 5'-GAT-3' motifs within gene promoters. This chain is GATA transcription factor 17 (GATA17), found in Arabidopsis thaliana (Mouse-ear cress).